A 281-amino-acid polypeptide reads, in one-letter code: MTDRYAVFGHPVAHSKSPQIHATFGRQEGIAVDYRAIDLAPDAFLAGLEAFAADGGVGANVTSPHKEAAFSVCTTLTARARRAGSVNTLLRKGDRWHGDTTDGIGLVRDLTDRHGLDLRGRRMLLIGAGGSARSVAPAFLDAGITELVVVNRTPERADELIDAMGEPGRAISRYWEDLRELGDFELIVNATSAGRDRDVEFKLPLSLVNSMTTAVDLNYGEAAIAFLAWARAANCRNTVDGLGMLVEQAAESFLQWHGVRPQTDEVYQTLRQGAAVLAGED.

Shikimate contacts are provided by residues 15-17 (SKS) and Thr-62. Lys-66 functions as the Proton acceptor in the catalytic mechanism. Residues Asn-87 and Asp-102 each coordinate shikimate. Residues 127–131 (GAGGS), 151–156 (NRTPER), and Leu-217 each bind NADP(+). Tyr-219 lines the shikimate pocket. Gly-241 is an NADP(+) binding site.

It belongs to the shikimate dehydrogenase family. In terms of assembly, homodimer.

It catalyses the reaction shikimate + NADP(+) = 3-dehydroshikimate + NADPH + H(+). The protein operates within metabolic intermediate biosynthesis; chorismate biosynthesis; chorismate from D-erythrose 4-phosphate and phosphoenolpyruvate: step 4/7. Functionally, involved in the biosynthesis of the chorismate, which leads to the biosynthesis of aromatic amino acids. Catalyzes the reversible NADPH linked reduction of 3-dehydroshikimate (DHSA) to yield shikimate (SA). This Stenotrophomonas maltophilia (strain R551-3) protein is Shikimate dehydrogenase (NADP(+)).